The following is a 21-amino-acid chain: Glucan endo-1,3-beta-glucosidase 2 (21 aa).

Residues 1-21 form a disordered region; the sequence is APGDLLWSDEFDGAAGSAPNP.

The catalysed reaction is Hydrolysis of (1-&gt;3)-beta-D-glucosidic linkages in (1-&gt;3)-beta-D-glucans.. This is Glucan endo-1,3-beta-glucosidase 2 from Papiliotrema laurentii (Cryptococcus laurentii).